Reading from the N-terminus, the 431-residue chain is GTPase Obg (431 aa).

The 158-residue stretch at 1–158 folds into the Obg domain; it reads MFVDQVKVDV…LTIRMELKVL (158 aa). The region spanning 159 to 335 is the OBG-type G domain; sequence ADVGLVGFPS…LLAKTADLLD (177 aa). Residues 165–172, 190–194, 212–215, 282–285, and 316–318 each bind GTP; these read GFPSVGKS, FTTLV, DLPG, TKMD, and SSI. Ser-172 and Thr-192 together coordinate Mg(2+). An OCT domain is found at 353–431; the sequence is YTTEADADFS…ILDYSFQFMD (79 aa).

This sequence belongs to the TRAFAC class OBG-HflX-like GTPase superfamily. OBG GTPase family. As to quaternary structure, monomer. Mg(2+) is required as a cofactor.

The protein localises to the cytoplasm. Its function is as follows. An essential GTPase which binds GTP, GDP and possibly (p)ppGpp with moderate affinity, with high nucleotide exchange rates and a fairly low GTP hydrolysis rate. Plays a role in control of the cell cycle, stress response, ribosome biogenesis and in those bacteria that undergo differentiation, in morphogenesis control. This chain is GTPase Obg, found in Lactiplantibacillus plantarum (strain ATCC BAA-793 / NCIMB 8826 / WCFS1) (Lactobacillus plantarum).